The following is a 471-amino-acid chain: Putative multidrug resistance protein MdtD (471 aa).

Residues 1-11 are Periplasmic-facing; that stretch reads MTDLPDSTRWQ. Residues 12–32 traverse the membrane as a helical segment; it reads LWIVAFGFFMQSLDTTIVNTA. Over 33-48 the chain is Cytoplasmic; that stretch reads LPSMAQSLGESPLHMH. A helical membrane pass occupies residues 49–69; it reads MVIVSYVLTVAVMLPASGWLA. Over 70–76 the chain is Periplasmic; sequence DKVGVRN. A helical transmembrane segment spans residues 77 to 97; sequence IFFTAIVLFTLGSLFCALSGT. Over 98–101 the chain is Cytoplasmic; it reads LNEL. Residues 102–124 form a helical membrane-spanning segment; the sequence is LLARALQGVGGAMMVPVGRLTVM. The Periplasmic segment spans residues 125–137; it reads KIVPREQYMAAMT. A helical transmembrane segment spans residues 138 to 158; sequence FVTLPGQVGPLLGPALGGLLV. The Cytoplasmic portion of the chain corresponds to 159–164; sequence EYASWH. The helical transmembrane segment at 165–185 threads the bilayer; that stretch reads WIFLINIPVGIIGAIATLMLM. At 186-196 the chain is on the periplasmic side; that stretch reads PNYTMQTRRFD. The chain crosses the membrane as a helical span at residues 197 to 217; sequence LSGFLLLAVGMAVLTLALDGS. The Cytoplasmic segment spans residues 218 to 224; it reads KGTGLSP. Residues 225–245 form a helical membrane-spanning segment; the sequence is LTIAGLVAVGVVALVLYLLHA. The Periplasmic segment spans residues 246-262; it reads RNNNRALFSLKLFRTRT. The chain crosses the membrane as a helical span at residues 263-283; sequence FSLGLAGSFAGRIGSGMLPFM. The Cytoplasmic portion of the chain corresponds to 284 to 285; that stretch reads TP. A helical transmembrane segment spans residues 286 to 306; it reads VFLQIGLGFSPFHAGLMMIPM. The Periplasmic segment spans residues 307–341; sequence VLGSMGMKRIVVQVVNCFGYRRVLVATTLGLSLVT. Residues 342–362 traverse the membrane as a helical segment; it reads LLFMTTALLGWYYVLPFVLFL. The Cytoplasmic portion of the chain corresponds to 363–395; that stretch reads QGMVNSTRFSSMNTLTLKDLPDNLASSGNSLLS. A helical transmembrane segment spans residues 396 to 416; that stretch reads MIMQLSMSIGVTIAGLLLGLF. Residues 417–430 lie on the Periplasmic side of the membrane; it reads GSQHVSVDSGTTQT. Residues 431–451 traverse the membrane as a helical segment; the sequence is VFMYTWLSMALIIALPAFIFA. Residues 452–471 lie on the Cytoplasmic side of the membrane; that stretch reads RVPNDTHQNVAISRRKRSAQ.

This sequence belongs to the major facilitator superfamily. TCR/Tet family.

It localises to the cell inner membrane. The polypeptide is Putative multidrug resistance protein MdtD (Escherichia coli O139:H28 (strain E24377A / ETEC)).